We begin with the raw amino-acid sequence, 266 residues long: Ribosomal RNA small subunit methyltransferase A (266 aa).

Asn-12, Leu-14, Gly-39, Glu-61, Asp-87, and Asn-107 together coordinate S-adenosyl-L-methionine.

It belongs to the class I-like SAM-binding methyltransferase superfamily. rRNA adenine N(6)-methyltransferase family. RsmA subfamily.

It is found in the cytoplasm. It carries out the reaction adenosine(1518)/adenosine(1519) in 16S rRNA + 4 S-adenosyl-L-methionine = N(6)-dimethyladenosine(1518)/N(6)-dimethyladenosine(1519) in 16S rRNA + 4 S-adenosyl-L-homocysteine + 4 H(+). Its function is as follows. Specifically dimethylates two adjacent adenosines (A1518 and A1519) in the loop of a conserved hairpin near the 3'-end of 16S rRNA in the 30S particle. May play a critical role in biogenesis of 30S subunits. The polypeptide is Ribosomal RNA small subunit methyltransferase A (Nitratidesulfovibrio vulgaris (strain DP4) (Desulfovibrio vulgaris)).